Consider the following 228-residue polypeptide: Superoxide dismutase [Mn], mitochondrial (228 aa).

Residues 1–24 constitute a mitochondrion transit peptide; it reads MALRNLMTKKPFAGILTFRQQLRC. Mn(2+) contacts are provided by H52, H100, D189, and H193.

Belongs to the iron/manganese superoxide dismutase family. As to quaternary structure, homotetramer. The cofactor is Mn(2+).

The protein resides in the mitochondrion matrix. The catalysed reaction is 2 superoxide + 2 H(+) = H2O2 + O2. Its function is as follows. Destroys superoxide anion radicals which are normally produced within the cells and which are toxic to biological systems. The chain is Superoxide dismutase [Mn], mitochondrial (SODA) from Capsicum annuum (Capsicum pepper).